The primary structure comprises 938 residues: Glutamate receptor ionotropic, NMDA 1 (938 aa).

Residues 1–18 (MSTMHLLTFALLFSCSFA) form the signal peptide. The Extracellular portion of the chain corresponds to 19-559 (RAACDPKIVN…TLDSFMQPFQ (541 aa)). Residues N61, N203, N239, N276, N300, N350, N368, N440, N471, and N491 are each glycosylated (N-linked (GlcNAc...) asparagine). C79 and C308 are joined by a disulfide. Cystine bridges form between C420–C454 and C436–C455. Residues P516, T518, and R523 each coordinate glycine. Residues 560-580 (STLWLLVGLSVHVVAVMLYLL) form a helical membrane-spanning segment. Topologically, residues 581 to 602 (DRFSPFGRFKVNSEEEEEDALT) are cytoplasmic. Residues 603–624 (LSSAMWFSWGVLLNSGIGEGAP) constitute an intramembrane region (discontinuously helical). The segment at 603–624 (LSSAMWFSWGVLLNSGIGEGAP) is pore-forming. At 625–630 (RSFSAR) the chain is on the cytoplasmic side. A helical membrane pass occupies residues 631–647 (ILGMVWAGFAMIIVASY). The Extracellular segment spans residues 648 to 812 (TANLAAFLVL…NAPATLTFEN (165 aa)). The N-linked (GlcNAc...) asparagine glycan is linked to N674. Glycine contacts are provided by S688 and D732. A disulfide bond links C744 and C798. The N-linked (GlcNAc...) asparagine glycan is linked to N771. Residues 813 to 833 (MAGVFMLVAGGIVAGIFLIFI) form a helical membrane-spanning segment. Over 834–938 (EIAYKRHKDA…LQLCSRHRES (105 aa)) the chain is Cytoplasmic. K877 is modified (phosphoserine). Phosphoserine; by PKC is present on residues S889, S890, S896, and S897. The interval 889 to 938 (SSFKRRRSSKDTSTGGGRGALQNQKDTVLPRRAIEREEGQLQLCSRHRES) is disordered. K898 is subject to Phosphoserine. The segment covering 916-927 (VLPRRAIEREEG) has biased composition (basic and acidic residues).

Belongs to the glutamate-gated ion channel (TC 1.A.10.1) family. NR1/GRIN1 subfamily. As to quaternary structure, heterotetramer; the NMDAR subunits are modular and harbor tiered domains that function in concert to regulate opening and closing of the cation-selective ion channel pore. Forms heterotetrameric channels composed of two GluN1/zeta subunits (GRIN1), and two identical GluN2/epsilon subunits (GRIN2A, GRIN2B, GRIN2C or GRIN2D) or GluN3 subunits (GRIN3A or GRIN3B) (in vitro). Can also form heterotetrameric channels that contain at least two GluN1 subunits and at least two different GluN2 subunits (or a combination of one GluN2 and one GluN3 subunits) (in vitro). In vivo, the subunit composition may vary in function of the expression levels of the different subunits. Found in a complex with GRIN2A or GRIN2B, GRIN3A and PPP2CB. Found in a complex with GRIN2A or GRIN2B and GRIN3B;. Interacts with SNX27 (via PDZ domain); the interaction is required for recycling to the plasma membrane when endocytosed and prevent degradation in lysosomes. Interacts with DLG4 and MPDZ. Interacts with LRFN1 and LRFN2. Interacts with MYZAP. Found in a complex with DLG4 and PRR7. Found in a complex with GRIN2B and PRR7. Interacts with PRR7; the interaction is reduced following NMDA receptor activity. NMDA is probably regulated by C-terminal phosphorylation of an isoform of NR1 by PKC. Dephosphorylated on Ser-897 probably by protein phosphatase 2A (PPP2CB). Its phosphorylated state is influenced by the formation of the NMDAR-PPP2CB complex and the NMDAR channel activity. Detected throughout the brain, in brain cortex, cerebellum, thalamus and olfactory bulb.

The protein resides in the cell membrane. The protein localises to the postsynaptic cell membrane. Its subcellular location is the synaptic cell membrane. It is found in the postsynaptic density membrane. The enzyme catalyses Ca(2+)(in) = Ca(2+)(out). It carries out the reaction Na(+)(in) = Na(+)(out). The catalysed reaction is K(+)(in) = K(+)(out). With respect to regulation, NMDA glutamate receptor activity is potentiated by Zn2(+) in a dose-dependent fashion. The potentiating effect of Zn2(+) is at submicromolar concentrations and its inhibitory action is at high micromolar to millimolar concentrations. Excitatory glycine receptors are inhibited by D-serine at 100uM. Functionally, component of N-methyl-D-aspartate (NMDA) receptors (NMDARs) that function as heterotetrameric, ligand-gated cation channels with high calcium permeability and voltage-dependent block by Mg(2+). NMDARs participate in synaptic plasticity for learning and memory formation by contributing to the long-term potentiation (LTP). Channel activation requires binding of the neurotransmitter L-glutamate to the GluN2 subunit, glycine or D-serine binding to the GluN1 subunit, plus membrane depolarization to eliminate channel inhibition by Mg(2+). NMDARs mediate simultaneously the potasium efflux and the influx of calcium and sodium. Each GluN2 or GluN3 subunit confers differential attributes to channel properties, including activation, deactivation and desensitization kinetics, pH sensitivity, Ca2(+) permeability, and binding to allosteric modulators. Forms excitatory glycinergic receptor complexes with GluN3 alone which are activated by glycine binding to the GluN1 and GluN3 subunits. This chain is Glutamate receptor ionotropic, NMDA 1, found in Rattus norvegicus (Rat).